Reading from the N-terminus, the 61-residue chain is Large ribosomal subunit protein bL33 (61 aa).

Belongs to the bacterial ribosomal protein bL33 family.

This Amoebophilus asiaticus (strain 5a2) protein is Large ribosomal subunit protein bL33.